The following is a 519-amino-acid chain: Cysteine--tRNA ligase (519 aa).

A Zn(2+)-binding site is contributed by cysteine 30. Residues 32–42 carry the 'HIGH' region motif; sequence PTVYDRAHLGN. 3 residues coordinate Zn(2+): cysteine 221, histidine 253, and glutamate 257. The 'KMSKS' region signature appears at 286 to 290; that stretch reads KMSKS. Lysine 289 lines the ATP pocket.

This sequence belongs to the class-I aminoacyl-tRNA synthetase family. In terms of assembly, monomer. It depends on Zn(2+) as a cofactor.

Its subcellular location is the cytoplasm. The enzyme catalyses tRNA(Cys) + L-cysteine + ATP = L-cysteinyl-tRNA(Cys) + AMP + diphosphate. The polypeptide is Cysteine--tRNA ligase (Cereibacter sphaeroides (strain KD131 / KCTC 12085) (Rhodobacter sphaeroides)).